Here is a 141-residue protein sequence, read N- to C-terminus: Hemoglobin subunit alpha-1/2 (141 aa).

The Globin domain maps to 1–141 (VLSAABKSBV…VSTVLTSKYR (141 aa)). At serine 3 the chain carries Phosphoserine. An N6-succinyllysine mark is found at lysine 7 and lysine 11. Residue lysine 16 is modified to N6-acetyllysine; alternate. Lysine 16 carries the post-translational modification N6-succinyllysine; alternate. Tyrosine 24 is subject to Phosphotyrosine. Phosphoserine is present on serine 35. Lysine 40 is subject to N6-succinyllysine. At serine 49 the chain carries Phosphoserine. Histidine 58 serves as a coordination point for O2. Histidine 87 is a heme b binding site. Residue serine 102 is modified to Phosphoserine. Threonine 108 is subject to Phosphothreonine. Residue serine 124 is modified to Phosphoserine. A phosphothreonine mark is found at threonine 134 and threonine 137. A Phosphoserine modification is found at serine 138.

It belongs to the globin family. In terms of assembly, heterotetramer of two alpha chains and two beta chains. As to expression, red blood cells.

Functionally, involved in oxygen transport from the lung to the various peripheral tissues. The polypeptide is Hemoglobin subunit alpha-1/2 (Odocoileus virginianus virginianus (Virginia white-tailed deer)).